The following is a 276-amino-acid chain: Odontogenic ameloblast-associated protein (276 aa).

Residues 1-15 (MRTLILLGILGATMS) form the signal peptide. T101, T113, and T117 each carry an O-linked (GalNAc...) threonine glycan. The interval 125–127 (MPS) is interaction with ARHGEF5. S246 is a glycosylation site (O-linked (GalNAc...) serine). Residues T247, T248, and T252 are each glycosylated (O-linked (GalNAc...) threonine). O-linked (GalNAc...) serine glycosylation is present at S253. O-linked (GalNAc...) threonine glycosylation is found at T254, T258, T260, and T270. S272 is a glycosylation site (O-linked (GalNAc...) serine).

Belongs to the ODAM family. As to quaternary structure, interacts (via C-terminus) with ARHGEF5. O-glycosylated.

It is found in the secreted. Its subcellular location is the cytoplasm. It localises to the nucleus. Its function is as follows. Tooth-associated epithelia protein that probably plays a role in odontogenesis, the complex process that results in the initiation and generation of the tooth. May be incorporated in the enamel matrix at the end of mineralization process. Involved in the induction of RHOA activity via interaction with ARHGEF and expression of downstream factors such as ROCK. Plays a role in attachment of the junctional epithelium to the tooth surface. The protein is Odontogenic ameloblast-associated protein (ODAM) of Sus scrofa (Pig).